An 88-amino-acid chain; its full sequence is MQVTDVRIRKITNEGRMKAIVSVTFDNCFVVHDIKIIEGQNGLFIAMPSRKTPEGEFKDIAHPINQETRDMVQKAVIEKYEAVISAGE.

The protein belongs to the SpoVG family.

Could be involved in septation. In Caldicellulosiruptor bescii (strain ATCC BAA-1888 / DSM 6725 / KCTC 15123 / Z-1320) (Anaerocellum thermophilum), this protein is Putative septation protein SpoVG.